A 198-amino-acid chain; its full sequence is Imidazole glycerol phosphate synthase subunit HisH (198 aa).

Residues 2 to 198 (KALLIDYGSG…ALARRYFEVL (197 aa)) enclose the Glutamine amidotransferase type-1 domain. Cys80 (nucleophile) is an active-site residue. Active-site residues include His176 and Glu178.

As to quaternary structure, heterodimer of HisH and HisF.

Its subcellular location is the cytoplasm. It carries out the reaction 5-[(5-phospho-1-deoxy-D-ribulos-1-ylimino)methylamino]-1-(5-phospho-beta-D-ribosyl)imidazole-4-carboxamide + L-glutamine = D-erythro-1-(imidazol-4-yl)glycerol 3-phosphate + 5-amino-1-(5-phospho-beta-D-ribosyl)imidazole-4-carboxamide + L-glutamate + H(+). The catalysed reaction is L-glutamine + H2O = L-glutamate + NH4(+). It functions in the pathway amino-acid biosynthesis; L-histidine biosynthesis; L-histidine from 5-phospho-alpha-D-ribose 1-diphosphate: step 5/9. Its function is as follows. IGPS catalyzes the conversion of PRFAR and glutamine to IGP, AICAR and glutamate. The HisH subunit catalyzes the hydrolysis of glutamine to glutamate and ammonia as part of the synthesis of IGP and AICAR. The resulting ammonia molecule is channeled to the active site of HisF. The polypeptide is Imidazole glycerol phosphate synthase subunit HisH (Thermus thermophilus (strain ATCC BAA-163 / DSM 7039 / HB27)).